Here is a 202-residue protein sequence, read N- to C-terminus: Elongation factor Ts, chloroplastic (202 aa).

The protein belongs to the EF-Ts family.

Its subcellular location is the plastid. The protein localises to the chloroplast. Its function is as follows. Associates with the EF-Tu.GDP complex and induces the exchange of GDP to GTP. It remains bound to the aminoacyl-tRNA.EF-Tu.GTP complex up to the GTP hydrolysis stage on the ribosome. The protein is Elongation factor Ts, chloroplastic (tsf) of Phaeodactylum tricornutum (strain CCAP 1055/1).